The following is a 624-amino-acid chain: Low affinity potassium transport system protein Kup (624 aa).

Helical transmembrane passes span 9–29 (LPAI…TSPL), 49–69 (VFGF…IKYL), 103–123 (VIMG…TPAI), 137–157 (PQLD…LFMI), 165–185 (VGKL…GLGL), 213–233 (VSFI…ALYA), 247–267 (WFTV…ALLL), 276–296 (PFFL…AALA), 337–357 (IYIP…IVIV), 365–385 (LAAA…ILST), 398–418 (FVAL…TANL), and 421–441 (LLSG…VMTT).

This sequence belongs to the HAK/KUP transporter (TC 2.A.72) family.

The protein resides in the cell inner membrane. It carries out the reaction K(+)(in) + H(+)(in) = K(+)(out) + H(+)(out). Its function is as follows. Responsible for the low-affinity transport of potassium into the cell. Likely operates as a K(+):H(+) symporter. In Shigella dysenteriae serotype 1 (strain Sd197), this protein is Low affinity potassium transport system protein Kup.